We begin with the raw amino-acid sequence, 395 residues long: D-alanine--D-alanine ligase (395 aa).

Residues 172–391 form the ATP-grasp domain; that stretch reads KVVLDAAGIP…YTELITRLIE (220 aa). Residue 204–266 coordinates ATP; sequence DAGLTYPLFV…EQGIDGREIE (63 aa). Residues aspartate 345, glutamate 358, and asparagine 360 each coordinate Mg(2+).

This sequence belongs to the D-alanine--D-alanine ligase family. The cofactor is Mg(2+). Mn(2+) is required as a cofactor.

Its subcellular location is the cytoplasm. The enzyme catalyses 2 D-alanine + ATP = D-alanyl-D-alanine + ADP + phosphate + H(+). It participates in cell wall biogenesis; peptidoglycan biosynthesis. Cell wall formation. The polypeptide is D-alanine--D-alanine ligase (Bifidobacterium longum (strain DJO10A)).